Reading from the N-terminus, the 600-residue chain is Aspartate--tRNA(Asp/Asn) ligase (600 aa).

Residue glutamate 181 participates in L-aspartate binding. Positions 205-208 (QQFK) are aspartate. Arginine 227 contacts L-aspartate. ATP-binding positions include 227–229 (RDE) and glutamine 236. Residue histidine 455 coordinates L-aspartate. ATP is bound at residue glutamate 489. Residue arginine 496 coordinates L-aspartate. 541 to 544 (GIDR) is a binding site for ATP.

This sequence belongs to the class-II aminoacyl-tRNA synthetase family. Type 1 subfamily. As to quaternary structure, homodimer.

Its subcellular location is the cytoplasm. The enzyme catalyses tRNA(Asx) + L-aspartate + ATP = L-aspartyl-tRNA(Asx) + AMP + diphosphate. Aspartyl-tRNA synthetase with relaxed tRNA specificity since it is able to aspartylate not only its cognate tRNA(Asp) but also tRNA(Asn). Reaction proceeds in two steps: L-aspartate is first activated by ATP to form Asp-AMP and then transferred to the acceptor end of tRNA(Asp/Asn). This chain is Aspartate--tRNA(Asp/Asn) ligase, found in Rubrobacter xylanophilus (strain DSM 9941 / JCM 11954 / NBRC 16129 / PRD-1).